We begin with the raw amino-acid sequence, 457 residues long: Argininosuccinate lyase (457 aa).

This sequence belongs to the lyase 1 family. Argininosuccinate lyase subfamily.

Its subcellular location is the cytoplasm. It catalyses the reaction 2-(N(omega)-L-arginino)succinate = fumarate + L-arginine. It functions in the pathway amino-acid biosynthesis; L-arginine biosynthesis; L-arginine from L-ornithine and carbamoyl phosphate: step 3/3. The chain is Argininosuccinate lyase from Serratia proteamaculans (strain 568).